A 1042-amino-acid chain; its full sequence is Ubiquitin carboxyl-terminal hydrolase 38 (1042 aa).

The USP domain occupies 445–949; the sequence is TGLINLGNTC…TAYVLLYKKQ (505 aa). Residue Cys-454 is the Nucleophile of the active site. The Proton acceptor role is filled by His-857.

Belongs to the peptidase C19 family. Interacts with isoform 1 of FBXW7; this interaction prevents FBXW7-mediated degradation of MYC. As to expression, highly expressed in skeletal muscle. Expressed in adrenal gland.

Its subcellular location is the cytoplasm. It localises to the nucleus. The catalysed reaction is Thiol-dependent hydrolysis of ester, thioester, amide, peptide and isopeptide bonds formed by the C-terminal Gly of ubiquitin (a 76-residue protein attached to proteins as an intracellular targeting signal).. In terms of biological role, deubiquitinating enzyme that plays a role in various cellular processes, including DNA repair, cell cycle regulation, and immune response. Plays a role in the inhibition of type I interferon signaling by mediating the 'Lys-33' to 'Lys-48' ubiquitination transition of TBK1 leading to its degradation. Cleaves the ubiquitin chain from the histone demethylase LSD1/KDM1A and prevents it from degradation by the 26S proteasome, thus maintaining LSD1 protein level in cells. Plays a role in the DNA damage response by regulating the deacetylase activity of HDAC1. Mechanistically, removes the 'Lys-63'-linked ubiquitin chain promoting the deacetylase activity of HDAC1 in response to DNA damage. Also acts as a specific deubiquitinase of histone deacetylase 3/HDAC3 and cleaves its 'Lys-63'-linked ubiquitin chains to lower its histone deacetylase activity. Regulates MYC levels and cell proliferation via antagonizing ubiquitin E3 ligase FBXW7 thereby preventing MYC 'Lys-48'-linked ubiquitination and degradation. Participates in antiviral response by removing both 'Lys-48'-linked and 'Lys-63'-linked polyubiquitination of Zika virus envelope protein E. Constitutively associated with IL-33R/IL1RL1, deconjugates its 'Lys-27'-linked polyubiquitination resulting in its autophagic degradation. The sequence is that of Ubiquitin carboxyl-terminal hydrolase 38 (USP38) from Homo sapiens (Human).